The sequence spans 391 residues: Nuclear hormone receptor family member nhr-115 (391 aa).

Positions 5–77 (LFPCQICGQN…IGMDASKFQY (73 aa)) form a DNA-binding region, nuclear receptor. An NR C4-type zinc finger spans residues 8 to 28 (CQICGQNSHGTHFGIVSCRAC). Residues 41 to 65 (ARKGCLTNFKDKGSCFCKPCRLRKC) form an NR C4-type; atypical zinc finger. The NR LBD domain occupies 130–388 (YLDHGCETPI…FSHPEMFDDS (259 aa)).

The protein belongs to the nuclear hormone receptor family.

Its subcellular location is the nucleus. Orphan nuclear receptor. In Caenorhabditis elegans, this protein is Nuclear hormone receptor family member nhr-115 (nhr-115).